The primary structure comprises 212 residues: uncharacterized protein (212 aa).

Gly53 and Glu74 together coordinate S-adenosyl-L-methionine.

This sequence belongs to the methyltransferase superfamily. YrrT family.

Functionally, could be a S-adenosyl-L-methionine-dependent methyltransferase. This is an uncharacterized protein from Exiguobacterium sibiricum (strain DSM 17290 / CCUG 55495 / CIP 109462 / JCM 13490 / 255-15).